The following is a 241-amino-acid chain: MSETLLYSGKAKDLFSTDDPEVLKMIYKDQATALNGKRKEQITGKGEVNYEISKLIFAYLSQQGIETHLIKNVSETEQLVKKVTIIPLEVVLRNVVAGSFARKFGQPLGQRLEQPIIEYYYKNDALDDPAINISQATALKLVTPTEVATIEAMTKQINTLLIKLFNEIGIDLIDFKLEFGRYQGRLILADEFSPDNCRLWDQKTHSSLDKDVFRQNKGDLVTVYETVLQRLTKMIGGFANV.

This sequence belongs to the SAICAR synthetase family.

The catalysed reaction is 5-amino-1-(5-phospho-D-ribosyl)imidazole-4-carboxylate + L-aspartate + ATP = (2S)-2-[5-amino-1-(5-phospho-beta-D-ribosyl)imidazole-4-carboxamido]succinate + ADP + phosphate + 2 H(+). The protein operates within purine metabolism; IMP biosynthesis via de novo pathway; 5-amino-1-(5-phospho-D-ribosyl)imidazole-4-carboxamide from 5-amino-1-(5-phospho-D-ribosyl)imidazole-4-carboxylate: step 1/2. The protein is Phosphoribosylaminoimidazole-succinocarboxamide synthase of Latilactobacillus sakei subsp. sakei (strain 23K) (Lactobacillus sakei subsp. sakei).